Here is a 272-residue protein sequence, read N- to C-terminus: Tryptophan synthase alpha chain (272 aa).

Active-site proton acceptor residues include Glu-53 and Asp-64.

Belongs to the TrpA family. Tetramer of two alpha and two beta chains.

The catalysed reaction is (1S,2R)-1-C-(indol-3-yl)glycerol 3-phosphate + L-serine = D-glyceraldehyde 3-phosphate + L-tryptophan + H2O. It functions in the pathway amino-acid biosynthesis; L-tryptophan biosynthesis; L-tryptophan from chorismate: step 5/5. Functionally, the alpha subunit is responsible for the aldol cleavage of indoleglycerol phosphate to indole and glyceraldehyde 3-phosphate. This chain is Tryptophan synthase alpha chain, found in Xanthomonas campestris pv. campestris (strain 8004).